The following is a 283-amino-acid chain: Probable endonuclease 4 (283 aa).

Positions 69, 109, 145, 179, 182, 216, 229, 231, and 261 each coordinate Zn(2+).

Belongs to the AP endonuclease 2 family. Zn(2+) is required as a cofactor.

It carries out the reaction Endonucleolytic cleavage to 5'-phosphooligonucleotide end-products.. Functionally, endonuclease IV plays a role in DNA repair. It cleaves phosphodiester bonds at apurinic or apyrimidinic (AP) sites, generating a 3'-hydroxyl group and a 5'-terminal sugar phosphate. This Prosthecochloris aestuarii (strain DSM 271 / SK 413) protein is Probable endonuclease 4.